The chain runs to 419 residues: CinA-like protein (419 aa).

The protein belongs to the CinA family.

This Leptospira borgpetersenii serovar Hardjo-bovis (strain JB197) protein is CinA-like protein.